A 596-amino-acid polypeptide reads, in one-letter code: MHHSSSGSRCVLQNGLELTVILPRLHRFDIIDTFKTLTKELLRQEHLPKVLQKKEPHQLTDRTFFIDGSNQGLKTIPSEILALKELEEVHLENNQIAEIPQGIQQLQNTKVLYLHNNSLQDLCPELGALSSLESLDLSGNPLVISSLHVVSRLRTLRELRLYRTGLTEIPTGICKSLHHLELFGLSENFLESLPEEIVNQTKLREIYLKQNHFEVFPCDLCVLYNLEVIDLDENKLKSIPGDIGHLVRLQKFYVASNHLMSLPESLSQCSKLSVLDLTHNSIHSLPSSLELLTELTEVGLSGNRLEKVPRLLCSWVSLHLLYLRNTSLHGLRDSFKRLINLRFLDLSQNHIEHFPVQICALKNLEILALDDNKVRQLPPSISLLSNLKILGLTGNDLLSFPEEIFSLISLEKLYIGQDQGSKLSSLPENIKRLMNLKELYIENNRLEQLPASLGLMPNLEVLDCRHNLLKQLPDAICRTRNLRELLLEDNLLCCLPENLDHLVNLKVLTLMNNPMVDPPIYVCNQGNEAIWKHLKENRIRKMMATTIQAWWRGIMVRKGYGSYEELLKARKKGKSPPKDKKGKKAAKGKPEKGNKK.

LRR repeat units lie at residues leucine 22–glutamine 44, leucine 59–leucine 83, lysine 84–leucine 106, asparagine 108–leucine 129, serine 130–arginine 152, leucine 153–serine 176, leucine 177–glutamine 200, lysine 202–leucine 223, tyrosine 224–leucine 246, arginine 248–cysteine 269, serine 270–threonine 293, leucine 295–tryptophan 315, serine 317–arginine 337, leucine 338–leucine 361, lysine 362–leucine 384, serine 385–leucine 407, leucine 410–leucine 433, methionine 434–proline 457, leucine 459–threonine 479, arginine 480–leucine 502, asparagine 504–glutamine 525, and asparagine 527–alanine 549. The IQ domain occupies arginine 540–alanine 569. Basic residues predominate over residues alanine 569–lysine 587. Residues alanine 569–lysine 596 form a disordered region.

The polypeptide is Leucine-rich repeat and IQ domain-containing protein 4 (Lrriq4) (Mus musculus (Mouse)).